The sequence spans 427 residues: 12-alpha,13-alpha-dihydroxyfumitremorgin C prenyltransferase (427 aa).

Glutamate 94 is a binding site for substrate. Arginine 105, lysine 192, tyrosine 194, tyrosine 268, glutamine 353, tyrosine 355, tyrosine 419, and tyrosine 423 together coordinate dimethylallyl diphosphate.

Belongs to the tryptophan dimethylallyltransferase family.

It carries out the reaction 12alpha,13alpha-dihydroxyfumitremorgin C + dimethylallyl diphosphate = fumitremorgin B + diphosphate. It functions in the pathway mycotoxin biosynthesis. Functionally, 12-alpha,13-alpha-dihydroxyfumitremorgin C prenyltransferase; part of the gene cluster that mediates the biosynthesis of fumitremorgins, indole alkaloids that carry not only intriguing chemical structures, but also interesting biological and pharmacological activities. The biosynthesis of fumitremorgin-type alkaloids begins by condensation of the two amino acids L-tryptophan and L-proline to brevianamide F, catalyzed by the non-ribosomal peptide synthetase ftmA. Brevianamide F is then prenylated by the prenyltransferase ftmPT1/ftmB in the presence of dimethylallyl diphosphate, resulting in the formation of tryprostatin B. The three cytochrome P450 monooxygenases, ftmP450-1/ftmC, ftmP450-2/ftmE and ftmP450-3/FtmG, are responsible for the conversion of tryprostatin B to 6-hydroxytryprostatin B, tryprostatin A to fumitremorgin C and fumitremorgin C to 12,13-dihydroxyfumitremorgin C, respectively. The putative methyltransferase ftmMT/ftmD is expected for the conversion of 6-hydroxytryprostatin B to tryprostatin A. FtmPT2/FtmH catalyzes the prenylation of 12,13-dihydroxyfumitre-morgin C in the presence of dimethylallyl diphosphate, resulting in the formation of fumitremorgin B. Fumitremorgin B is further converted to verruculogen by ftmOx1/ftmF via the insertion of an endoperoxide bond between the two prenyl moieties. In some fungal species, verruculogen is further converted to fumitremorgin A, but the enzymes involved in this step have not been identified yet. This Aspergillus fumigatus (Neosartorya fumigata) protein is 12-alpha,13-alpha-dihydroxyfumitremorgin C prenyltransferase.